Reading from the N-terminus, the 358-residue chain is Cyanide hydratase (358 aa).

Residues 8 to 287 form the CN hydrolase domain; the sequence is YKAAAVNAEP…QGLLFVDIDL (280 aa). Catalysis depends on Glu48, which acts as the Proton acceptor. Residue Lys130 is part of the active site. Cys165 serves as the catalytic Nucleophile.

Belongs to the carbon-nitrogen hydrolase superfamily. Nitrilase family. Oligomer of dimers, forming left-handed helical fibers.

It catalyses the reaction formamide = hydrogen cyanide + H2O. Functionally, catalyzes the hydration of cyanide to formamide. Degradation of cyanide may be important for plant pathogenic fungi in infection of cyanogenic plants. This Penicillium rubens (strain ATCC 28089 / DSM 1075 / NRRL 1951 / Wisconsin 54-1255) (Penicillium chrysogenum) protein is Cyanide hydratase.